The following is a 339-amino-acid chain: Ketol-acid reductoisomerase (NADP(+)) (339 aa).

A KARI N-terminal Rossmann domain is found at 1–182 (MRVYYDRDAD…GGGRAGIIET (182 aa)). Residues 24-27 (YGSQ), arginine 48, serine 51, and 83-86 (DEGQ) contribute to the NADP(+) site. Histidine 108 is a catalytic residue. Position 134 (glycine 134) interacts with NADP(+). The 146-residue stretch at 183–328 (SFKEEVETDL…EKLRGMMPWI (146 aa)) folds into the KARI C-terminal knotted domain. Mg(2+) contacts are provided by aspartate 191, glutamate 195, glutamate 227, and glutamate 231. Serine 252 contacts substrate.

Belongs to the ketol-acid reductoisomerase family. Mg(2+) is required as a cofactor.

It carries out the reaction (2R)-2,3-dihydroxy-3-methylbutanoate + NADP(+) = (2S)-2-acetolactate + NADPH + H(+). The enzyme catalyses (2R,3R)-2,3-dihydroxy-3-methylpentanoate + NADP(+) = (S)-2-ethyl-2-hydroxy-3-oxobutanoate + NADPH + H(+). It functions in the pathway amino-acid biosynthesis; L-isoleucine biosynthesis; L-isoleucine from 2-oxobutanoate: step 2/4. It participates in amino-acid biosynthesis; L-valine biosynthesis; L-valine from pyruvate: step 2/4. Its function is as follows. Involved in the biosynthesis of branched-chain amino acids (BCAA). Catalyzes an alkyl-migration followed by a ketol-acid reduction of (S)-2-acetolactate (S2AL) to yield (R)-2,3-dihydroxy-isovalerate. In the isomerase reaction, S2AL is rearranged via a Mg-dependent methyl migration to produce 3-hydroxy-3-methyl-2-ketobutyrate (HMKB). In the reductase reaction, this 2-ketoacid undergoes a metal-dependent reduction by NADPH to yield (R)-2,3-dihydroxy-isovalerate. This chain is Ketol-acid reductoisomerase (NADP(+)), found in Gluconacetobacter diazotrophicus (strain ATCC 49037 / DSM 5601 / CCUG 37298 / CIP 103539 / LMG 7603 / PAl5).